A 423-amino-acid polypeptide reads, in one-letter code: Histidine--tRNA ligase (423 aa).

This sequence belongs to the class-II aminoacyl-tRNA synthetase family. As to quaternary structure, homodimer.

It is found in the cytoplasm. The catalysed reaction is tRNA(His) + L-histidine + ATP = L-histidyl-tRNA(His) + AMP + diphosphate + H(+). The polypeptide is Histidine--tRNA ligase (Rhodococcus opacus (strain B4)).